The sequence spans 325 residues: Diacylglycerol acyltransferase/mycolyltransferase Ag85B (325 aa).

The first 40 residues, 1-40, serve as a signal peptide directing secretion; sequence MTDVSGKIRAWGRRLLVGAAAAAALPGLVGLAGGAATAGA. 82–83 is a binding site for substrate; sequence LR. The interval 98 to 108 is fibronectin-binding; it reads FEWYYQSGLSV. Cys127 and Cys132 are joined by a disulfide. Substrate contacts are provided by Ser166 and Asp194. Catalysis depends on Ser166, which acts as the Nucleophile. Residue Glu270 is part of the active site. Substrate is bound by residues 272–275, Lys279, and 302–304; these read FVRS and HSW. His302 is an active-site residue.

The protein belongs to the mycobacterial A85 antigen family.

It is found in the secreted. The enzyme catalyses 2 alpha,alpha'-trehalose 6-mycolate = alpha,alpha'-trehalose 6,6'-bismycolate + alpha,alpha-trehalose. The catalysed reaction is an acyl-CoA + a 1,2-diacyl-sn-glycerol = a triacyl-sn-glycerol + CoA. The antigen 85 proteins (FbpA, FbpB, FbpC) are responsible for the high affinity of mycobacteria for fibronectin, a large adhesive glycoprotein, which facilitates the attachment of M.tuberculosis to murine alveolar macrophages (AMs). They also help to maintain the integrity of the cell wall by catalyzing the transfer of mycolic acids to cell wall arabinogalactan and through the synthesis of alpha,alpha-trehalose dimycolate (TDM, cord factor). They catalyze the transfer of a mycoloyl residue from one molecule of alpha,alpha-trehalose monomycolate (TMM) to another TMM, leading to the formation of TDM. This chain is Diacylglycerol acyltransferase/mycolyltransferase Ag85B (fbpB), found in Mycobacterium kansasii.